The following is a 90-amino-acid chain: Small ribosomal subunit protein bS20 (90 aa).

It belongs to the bacterial ribosomal protein bS20 family.

Binds directly to 16S ribosomal RNA. In Nautilia profundicola (strain ATCC BAA-1463 / DSM 18972 / AmH), this protein is Small ribosomal subunit protein bS20.